A 789-amino-acid chain; its full sequence is Kin of IRRE-like protein 1 (789 aa).

Positions 1-47 are cleaved as a signal peptide; it reads MTLENRSTCLMTCQSSLLPKKPRFLSQKMWAPHLVVAYLIFVTLALA. N-linked (GlcNAc...) asparagine glycosylation is found at Asn-5, Asn-78, and Asn-172. Over 48 to 531 the chain is Extracellular; sequence LPGTQTRFSQ…REVLPVGIIA (484 aa). 5 Ig-like C2-type domains span residues 49–147, 152–248, 255–335, 340–419, and 424–520; these read PGTQ…AKLT, PEDT…TSIE, PTVT…TLVN, PRIV…EVPL, and PPII…IQLE. A disulfide bridge connects residues Cys-74 and Cys-132. Cystine bridges form between Cys-175-Cys-232 and Cys-276-Cys-319. The N-linked (GlcNAc...) asparagine glycan is linked to Asn-329. Residues Cys-361 and Cys-403 are joined by a disulfide bond. Positions 437 to 439 match the Cell attachment site motif; sequence RGD. Cys-445 and Cys-504 form a disulfide bridge. Asn-503 is a glycosylation site (N-linked (GlcNAc...) asparagine). Residues 532 to 552 form a helical membrane-spanning segment; the sequence is GATIGAGILLVFSFAALVFFL. Residues 553 to 789 lie on the Cytoplasmic side of the membrane; it reads YRRRKGSRKD…RFQQRMQTHV (237 aa). A Phosphoserine modification is found at Ser-606. Residues Tyr-637 and Tyr-638 each carry the phosphotyrosine; by FYN modification. 2 positions are modified to phosphotyrosine: Tyr-654 and Tyr-657. The tract at residues 687-713 is disordered; the sequence is RAPASDYGTEPTPSGPSAPGGTDTTSQ. Residues 694 to 712 are compositionally biased toward low complexity; it reads GTEPTPSGPSAPGGTDTTS. Tyr-756 is modified (phosphotyrosine).

It belongs to the immunoglobulin superfamily. Interacts with TJP1/ZO-1 and with NPHS2/podocin (via the C-terminus). Interacts with NPHS1/nephrin (via the Ig-like domains); this interaction is dependent on KIRREL1 glycosylation. Homodimer (via the Ig-like domains). Interacts when tyrosine-phosphorylated with GRB2. Post-translationally, phosphorylation probably regulates the interaction with NPHS2. Phosphorylated at Tyr-637 and Tyr-638 by FYN, leading to GRB2 binding. In terms of processing, N-glycosylated.

The protein resides in the cell membrane. Its function is as follows. Required for proper function of the glomerular filtration barrier. It is involved in the maintenance of a stable podocyte architecture with interdigitating foot processes connected by specialized cell-cell junctions, known as the slit diaphragm. It is a signaling protein that needs the presence of TEC kinases to fully trans-activate the transcription factor AP-1. The sequence is that of Kin of IRRE-like protein 1 (Kirrel1) from Rattus norvegicus (Rat).